The primary structure comprises 341 residues: Putative NADPH-dependent methylglyoxal reductase GRP2 (341 aa).

Positions 40 and 171 each coordinate NADP(+).

It belongs to the NAD(P)-dependent epimerase/dehydratase family. Dihydroflavonol-4-reductase subfamily.

The protein localises to the cytoplasm. It catalyses the reaction (S)-lactaldehyde + NADP(+) = methylglyoxal + NADPH + H(+). Catalyzes the irreversible reduction of the cytotoxic compound methylglyoxal (MG, 2-oxopropanal) to (S)-lactaldehyde. MG is synthesized via a bypath of glycolysis from dihydroxyacetone phosphate and is believed to play a role in cell cycle regulation and stress adaptation. The protein is Putative NADPH-dependent methylglyoxal reductase GRP2 (GRP2) of Candida albicans (strain SC5314 / ATCC MYA-2876) (Yeast).